Consider the following 430-residue polypeptide: Trigger factor (430 aa).

A PPIase FKBP-type domain is found at 157 to 242; the sequence is GDLVALETWS…AVEVSEPVLP (86 aa).

This sequence belongs to the FKBP-type PPIase family. Tig subfamily.

The protein localises to the cytoplasm. It carries out the reaction [protein]-peptidylproline (omega=180) = [protein]-peptidylproline (omega=0). Functionally, involved in protein export. Acts as a chaperone by maintaining the newly synthesized protein in an open conformation. Functions as a peptidyl-prolyl cis-trans isomerase. This Xanthomonas oryzae pv. oryzae (strain PXO99A) protein is Trigger factor.